The primary structure comprises 88 residues: Synaptonemal complex central element protein 3 (88 aa).

Positions 8-75 (ERSYDNMLKM…FLNCKEEMEK (68 aa)) form a coiled coil.

As to quaternary structure, homodimer. Can form higher-order homooligomers. Interacts with SYCP1 (via tetrameric core); the interaction remodels SYCP1 homotetramers to 2:1 heterotrimers with SYCE3. SYCP1/SYCE3 heterotrimers form lattice assemblies as part of the mature synaptonemal complex via both lateral and head-to-head interactions. Interacts with the SYCE1-SIX6OS1 complex; the interaction recruits the SYCE1-SIX6OS1 complex to the central element of the synaptonemal complex. Interacts with the SYCE2-TEX12 complex; the interaction promotes fibrous assembly of SYCE2-TEX12 as part of the synaptonemal complex central element. Interacts with SYCE1. Interacts with SYCE2. Interacts with proteasome subunit PSMA8; to participate in meiosis progression during spermatogenesis. Interacts with SPO16. Expression is restricted to spermatocytes and is absent in spermatogonia, spermatids and spermatogonia (at protein level). Expressed in adult testis and embryonic ovary. Expressed in the convoluted seminiferous tubules in spermatogonia and spermatocytes.

It localises to the nucleus. The protein localises to the chromosome. Functionally, major component of the transverse central element of synaptonemal complexes (SCS), formed between homologous chromosomes during meiotic prophase. Required for the assembly of the central element of the synaptonemal complex during meiosis, via remodeling of SYCP1 lattice structures and promoting recruitment of SYCE2-TEX12 and SYCE1-SIX60S1 complexes. Required for chromosome loading of the central element-specific SCS proteins, and for initiating synapsis between homologous chromosomes. Chromosome loading appears to require SYCP1. Required for fertility and normal testis development. May play a role in apoptosis of spermatogenic cells and pathogenesis of cryptorchidism. This chain is Synaptonemal complex central element protein 3, found in Mus musculus (Mouse).